Consider the following 136-residue polypeptide: Ribonuclease P protein component (136 aa).

Belongs to the RnpA family. In terms of assembly, consists of a catalytic RNA component (M1 or rnpB) and a protein subunit.

The catalysed reaction is Endonucleolytic cleavage of RNA, removing 5'-extranucleotides from tRNA precursor.. RNaseP catalyzes the removal of the 5'-leader sequence from pre-tRNA to produce the mature 5'-terminus. It can also cleave other RNA substrates such as 4.5S RNA. The protein component plays an auxiliary but essential role in vivo by binding to the 5'-leader sequence and broadening the substrate specificity of the ribozyme. This chain is Ribonuclease P protein component, found in Arthrobacter sp. (strain FB24).